The following is a 208-amino-acid chain: N-(5'-phosphoribosyl)anthranilate isomerase (208 aa).

The protein belongs to the TrpF family.

The enzyme catalyses N-(5-phospho-beta-D-ribosyl)anthranilate = 1-(2-carboxyphenylamino)-1-deoxy-D-ribulose 5-phosphate. Its pathway is amino-acid biosynthesis; L-tryptophan biosynthesis; L-tryptophan from chorismate: step 3/5. The sequence is that of N-(5'-phosphoribosyl)anthranilate isomerase from Methanothrix thermoacetophila (strain DSM 6194 / JCM 14653 / NBRC 101360 / PT) (Methanosaeta thermophila).